A 163-amino-acid chain; its full sequence is HTH-type transcriptional regulator IscR (163 aa).

The 130-residue stretch at Arg2 to Asn131 folds into the HTH rrf2-type domain. A DNA-binding region (H-T-H motif) is located at residues Leu28–Lys51. Residues Cys92, Cys98, and Cys104 each contribute to the [2Fe-2S] cluster site.

It depends on [2Fe-2S] cluster as a cofactor.

Functionally, regulates the transcription of several operons and genes involved in the biogenesis of Fe-S clusters and Fe-S-containing proteins. The polypeptide is HTH-type transcriptional regulator IscR (Klebsiella pneumoniae subsp. pneumoniae (strain ATCC 700721 / MGH 78578)).